The chain runs to 155 residues: MAEEILGNIAEEAHAALLASAGDEATKKSGAIRLPIEDSLDGDFGSRGTAYTDLSTTTSAGTSGQLVERTGGISFGRLLSVAGSCSINLLLPFLNGLMLGFGELLAHELSWKFSWFDKERNRGYRIYPEVRKAAELQERERQRALSRAAGPDGFL.

It belongs to the MIM1 family.

The protein resides in the mitochondrion outer membrane. In terms of biological role, required for the assembly of the TOM (translocase of outer membrane) receptor complex, which is responsible for the recognition and translocation of cytosolically synthesized mitochondrial preproteins. This chain is Mitochondrial import protein 1, found in Eremothecium gossypii (strain ATCC 10895 / CBS 109.51 / FGSC 9923 / NRRL Y-1056) (Yeast).